The primary structure comprises 384 residues: Mannitol-1-phosphate 5-dehydrogenase (384 aa).

3–14 (AVHFGAGNIGRG) contacts NAD(+).

It belongs to the mannitol dehydrogenase family.

It catalyses the reaction D-mannitol 1-phosphate + NAD(+) = beta-D-fructose 6-phosphate + NADH + H(+). This is Mannitol-1-phosphate 5-dehydrogenase from Arthrobacter sp. (strain FB24).